A 361-amino-acid chain; its full sequence is Chorismate synthase (361 aa).

The NADP(+) site is built by arginine 48 and arginine 54. Residues 125–127 (RSS), 238–239 (NA), glycine 278, 293–297 (KPTSS), and arginine 319 contribute to the FMN site.

The protein belongs to the chorismate synthase family. In terms of assembly, homotetramer. It depends on FMNH2 as a cofactor.

It carries out the reaction 5-O-(1-carboxyvinyl)-3-phosphoshikimate = chorismate + phosphate. The protein operates within metabolic intermediate biosynthesis; chorismate biosynthesis; chorismate from D-erythrose 4-phosphate and phosphoenolpyruvate: step 7/7. In terms of biological role, catalyzes the anti-1,4-elimination of the C-3 phosphate and the C-6 proR hydrogen from 5-enolpyruvylshikimate-3-phosphate (EPSP) to yield chorismate, which is the branch point compound that serves as the starting substrate for the three terminal pathways of aromatic amino acid biosynthesis. This reaction introduces a second double bond into the aromatic ring system. The polypeptide is Chorismate synthase (Klebsiella pneumoniae (strain 342)).